We begin with the raw amino-acid sequence, 75 residues long: Small ribosomal subunit protein bS18 (75 aa).

This sequence belongs to the bacterial ribosomal protein bS18 family. As to quaternary structure, part of the 30S ribosomal subunit. Forms a tight heterodimer with protein bS6.

Functionally, binds as a heterodimer with protein bS6 to the central domain of the 16S rRNA, where it helps stabilize the platform of the 30S subunit. This Yersinia enterocolitica serotype O:8 / biotype 1B (strain NCTC 13174 / 8081) protein is Small ribosomal subunit protein bS18.